The primary structure comprises 497 residues: Glycerol kinase (497 aa).

Thr-21 serves as a coordination point for ADP. ATP is bound by residues Thr-21 and Thr-22. Thr-21 contacts sn-glycerol 3-phosphate. Residue Arg-25 coordinates ADP. Arg-88, Glu-89, Tyr-140, and Asp-244 together coordinate sn-glycerol 3-phosphate. Glycerol-binding residues include Arg-88, Glu-89, Tyr-140, Asp-244, and Gln-245. Thr-266 and Gly-309 together coordinate ADP. ATP is bound by residues Thr-266, Gly-309, Gln-313, and Gly-410. ADP is bound by residues Gly-410 and Asn-414.

The protein belongs to the FGGY kinase family.

It carries out the reaction glycerol + ATP = sn-glycerol 3-phosphate + ADP + H(+). Its pathway is polyol metabolism; glycerol degradation via glycerol kinase pathway; sn-glycerol 3-phosphate from glycerol: step 1/1. Inhibited by fructose 1,6-bisphosphate (FBP). Key enzyme in the regulation of glycerol uptake and metabolism. Catalyzes the phosphorylation of glycerol to yield sn-glycerol 3-phosphate. The chain is Glycerol kinase from Gloeobacter violaceus (strain ATCC 29082 / PCC 7421).